Reading from the N-terminus, the 301-residue chain is Homoserine O-acetyltransferase (301 aa).

The active-site Acyl-thioester intermediate is the C142. Positions 163 and 192 each coordinate substrate. Residue H235 is the Proton acceptor of the active site. E237 is an active-site residue. R249 contributes to the substrate binding site.

Belongs to the MetA family.

It localises to the cytoplasm. The catalysed reaction is L-homoserine + acetyl-CoA = O-acetyl-L-homoserine + CoA. It functions in the pathway amino-acid biosynthesis; L-methionine biosynthesis via de novo pathway; O-acetyl-L-homoserine from L-homoserine: step 1/1. Transfers an acetyl group from acetyl-CoA to L-homoserine, forming acetyl-L-homoserine. The sequence is that of Homoserine O-acetyltransferase from Bacillus mycoides (strain KBAB4) (Bacillus weihenstephanensis).